The sequence spans 242 residues: Pyridoxine 5'-phosphate synthase (242 aa).

Asn-7 is a binding site for 3-amino-2-oxopropyl phosphate. 9–10 (DH) provides a ligand contact to 1-deoxy-D-xylulose 5-phosphate. A 3-amino-2-oxopropyl phosphate-binding site is contributed by Arg-18. Catalysis depends on His-43, which acts as the Proton acceptor. Arg-45 and His-50 together coordinate 1-deoxy-D-xylulose 5-phosphate. The active-site Proton acceptor is Glu-70. Thr-100 is a binding site for 1-deoxy-D-xylulose 5-phosphate. His-190 acts as the Proton donor in catalysis. Residues Gly-191 and 212–213 (GH) each bind 3-amino-2-oxopropyl phosphate.

Belongs to the PNP synthase family. In terms of assembly, homooctamer; tetramer of dimers.

It localises to the cytoplasm. It catalyses the reaction 3-amino-2-oxopropyl phosphate + 1-deoxy-D-xylulose 5-phosphate = pyridoxine 5'-phosphate + phosphate + 2 H2O + H(+). The protein operates within cofactor biosynthesis; pyridoxine 5'-phosphate biosynthesis; pyridoxine 5'-phosphate from D-erythrose 4-phosphate: step 5/5. Functionally, catalyzes the complicated ring closure reaction between the two acyclic compounds 1-deoxy-D-xylulose-5-phosphate (DXP) and 3-amino-2-oxopropyl phosphate (1-amino-acetone-3-phosphate or AAP) to form pyridoxine 5'-phosphate (PNP) and inorganic phosphate. The chain is Pyridoxine 5'-phosphate synthase from Thermodesulfovibrio yellowstonii (strain ATCC 51303 / DSM 11347 / YP87).